We begin with the raw amino-acid sequence, 236 residues long: Small ribosomal subunit protein uS2c (236 aa).

This sequence belongs to the universal ribosomal protein uS2 family.

Its subcellular location is the plastid. The protein resides in the chloroplast. The polypeptide is Small ribosomal subunit protein uS2c (rps2) (Oenothera parviflora (Small-flowered evening primrose)).